The chain runs to 1413 residues: Alpha-latrocrustotoxin-Lt1a (1413 aa).

The propeptide occupies 1–28; the sequence is VSIFIFHFSANILVRNSEMKGKRVISKR. The segment at 238–257 is helix H8 is the probable transmembrane region of the tetrameric pore inserted in the target cell membrane; it reads ALFALFYGTQTFISIMFYLV. ANK repeat units follow at residues 457–490, 494–524, 528–557, 562–592, 596–625, 629–658, 664–694, 699–729, 733–762, 766–795, 799–828, 832–861, 866–895, 899–928, 965–995, 996–1026, 1031–1072, 1077–1106, 1109–1139, and 1143–1172; these read DIHRDLYNAAQMPYKETALGICRKLIDSGAQVGA, MGRKSIHASATAGNDDVARLLLAKNNGLLNV, NGYTPLHIASERKNNDFVKFLLEKGADVNV, NELTPLHLAARQDFTIIVKTLMEKRGIDVNA, AGFTPLHLSITSNSRAARTLINETPAGINI, SGLTPLHLAVLQNNLSAAKVLVKSNKKVKL, NGMTPLHYASMLGNLEFVKYFTSEQGIDVNA, KNWTPLHLAILFKKFDVAQSLLQVRNIDIST, QAITPLHLAAATGNSQIVKTILNSGAVVDQ, NGFTALHLAIMNPNTETPQFLIAKGANINA, DGSTPLHFAAALGKTNIFQLLMDKGANIKA, INQMPIHEAVVNGHLAIVKMLIEQDSSLMN, RDEYPFYLAAEKRYKDVFNYLESKGADVNE, DGNTLLHLFSINGEVEVVQFLIQNGADFRL, RGKTILYHAICDSVKYDRIEVVRYFVETLNE, DQCSPLQEAAAYAHLDLVKYFVQERGINPTA, NQVS…DINK, QQSTPVSSAVYGNKVSILNYLIRNGADPNK, RGDPPLFIAAMIGQYDIVKSLVEQHKIDVNT, and EQFTPLHAAASNDHIDVVKYLIQKGADVNA. A propeptide spanning residues 1193 to 1413 is cleaved from the precursor; that stretch reads RSLGRRFFRN…NRPTNVLQIK (221 aa).

This sequence belongs to the cationic peptide 01 (latrotoxin) family. 01 (alpha-latrocrustotoxin) subfamily. In terms of assembly, homotetramer in membranes. Expressed by the venom gland.

Its subcellular location is the secreted. The protein resides in the target cell membrane. Crustacean-selective presynaptic neurotoxin that induces neurotransmitter exocytosis. May bind to crustacean neurexin-1 homolog, adhesion G protein-coupled receptor L1 homolog, and receptor-type tyrosine-protein phosphatase S homolog, and induces neurotransmitter exocytosis both by forming tetrameric pores in membranes and signaling via G protein-coupled receptor. This recombinant protein form channels in artificial membrane bilayers, that are stabilized by calcium ions and allow calcium flux at negative membrane potentials. This Latrodectus tredecimguttatus (Mediterranean black widow spider) protein is Alpha-latrocrustotoxin-Lt1a.